A 143-amino-acid chain; its full sequence is Peptide methionine sulfoxide reductase B9 (143 aa).

In terms of domain architecture, MsrB spans 19-140 (DQDWRAILSP…NSVSLKFSEI (122 aa)). Residues cysteine 58, cysteine 61, cysteine 104, and cysteine 107 each contribute to the Zn(2+) site. Cysteine 76 and cysteine 129 are disulfide-bonded. Catalysis depends on cysteine 129, which acts as the Nucleophile.

It belongs to the MsrB Met sulfoxide reductase family. Requires Zn(2+) as cofactor.

The protein resides in the cytoplasm. It localises to the cytosol. It carries out the reaction L-methionyl-[protein] + [thioredoxin]-disulfide + H2O = L-methionyl-(R)-S-oxide-[protein] + [thioredoxin]-dithiol. Functionally, catalyzes the reduction of methionine sulfoxide (MetSO) to methionine in proteins. Plays a protective role against oxidative stress by restoring activity to proteins that have been inactivated by methionine oxidation. MSRB family specifically reduces the MetSO R-enantiomer. The polypeptide is Peptide methionine sulfoxide reductase B9 (MSRB9) (Arabidopsis thaliana (Mouse-ear cress)).